The sequence spans 475 residues: Ribulose bisphosphate carboxylase large chain (475 aa).

Positions M1–S2 are excised as a propeptide. P3 is subject to N-acetylproline. K14 bears the N6,N6,N6-trimethyllysine mark. Substrate-binding residues include N123 and T173. Residue K175 is the Proton acceptor of the active site. Residue K177 participates in substrate binding. Mg(2+) is bound by residues K201, D203, and E204. Position 201 is an N6-carboxylysine (K201). The active-site Proton acceptor is the H294. Residues R295, H327, and S379 each contribute to the substrate site.

It belongs to the RuBisCO large chain family. Type I subfamily. Heterohexadecamer of 8 large chains and 8 small chains; disulfide-linked. The disulfide link is formed within the large subunit homodimers. Requires Mg(2+) as cofactor. The disulfide bond which can form in the large chain dimeric partners within the hexadecamer appears to be associated with oxidative stress and protein turnover.

It is found in the plastid. It localises to the chloroplast. The catalysed reaction is 2 (2R)-3-phosphoglycerate + 2 H(+) = D-ribulose 1,5-bisphosphate + CO2 + H2O. It carries out the reaction D-ribulose 1,5-bisphosphate + O2 = 2-phosphoglycolate + (2R)-3-phosphoglycerate + 2 H(+). Functionally, ruBisCO catalyzes two reactions: the carboxylation of D-ribulose 1,5-bisphosphate, the primary event in carbon dioxide fixation, as well as the oxidative fragmentation of the pentose substrate in the photorespiration process. Both reactions occur simultaneously and in competition at the same active site. The chain is Ribulose bisphosphate carboxylase large chain from Magnolia macrophylla (Bigleaf magnolia).